The following is a 1058-amino-acid chain: Carbamoyl phosphate synthase large chain (1058 aa).

The interval 1-401 is carboxyphosphate synthetic domain; it reads MPKRTDIQKI…SLLKACRSLE (401 aa). 12 residues coordinate ATP: R129, R169, G175, G176, R208, I210, E215, G241, I242, H243, Q284, and E298. In terms of domain architecture, ATP-grasp 1 spans 133-327; it reads KQLMEELEQP…IAKLAAKIAV (195 aa). Residues Q284, E298, and N300 each coordinate Mg(2+). Mn(2+)-binding residues include Q284, E298, and N300. Residues 402–546 form an oligomerization domain region; it reads IGVHHNEIPE…YSTYGWENES (145 aa). The tract at residues 547–929 is carbamoyl phosphate synthetic domain; the sequence is IRSDKESVLV…ALYKAFEASY (383 aa). In terms of domain architecture, ATP-grasp 2 spans 671-861; sequence EQALKELDIP…MAQVATKLIL (191 aa). ATP contacts are provided by R707, S746, I748, E752, G777, V778, H779, S780, Q820, and E832. Q820, E832, and N834 together coordinate Mg(2+). Residues Q820, E832, and N834 each contribute to the Mn(2+) site. The 129-residue stretch at 930–1058 folds into the MGS-like domain; sequence LHLPTFGNVV…ESRSFVTEAI (129 aa). The interval 930–1058 is allosteric domain; the sequence is LHLPTFGNVV…ESRSFVTEAI (129 aa).

Belongs to the CarB family. Composed of two chains; the small (or glutamine) chain promotes the hydrolysis of glutamine to ammonia, which is used by the large (or ammonia) chain to synthesize carbamoyl phosphate. Tetramer of heterodimers (alpha,beta)4. The cofactor is Mg(2+). It depends on Mn(2+) as a cofactor.

It carries out the reaction hydrogencarbonate + L-glutamine + 2 ATP + H2O = carbamoyl phosphate + L-glutamate + 2 ADP + phosphate + 2 H(+). The catalysed reaction is hydrogencarbonate + NH4(+) + 2 ATP = carbamoyl phosphate + 2 ADP + phosphate + 2 H(+). Its pathway is amino-acid biosynthesis; L-arginine biosynthesis; carbamoyl phosphate from bicarbonate: step 1/1. The protein operates within pyrimidine metabolism; UMP biosynthesis via de novo pathway; (S)-dihydroorotate from bicarbonate: step 1/3. Large subunit of the glutamine-dependent carbamoyl phosphate synthetase (CPSase). CPSase catalyzes the formation of carbamoyl phosphate from the ammonia moiety of glutamine, carbonate, and phosphate donated by ATP, constituting the first step of 2 biosynthetic pathways, one leading to arginine and/or urea and the other to pyrimidine nucleotides. The large subunit (synthetase) binds the substrates ammonia (free or transferred from glutamine from the small subunit), hydrogencarbonate and ATP and carries out an ATP-coupled ligase reaction, activating hydrogencarbonate by forming carboxy phosphate which reacts with ammonia to form carbamoyl phosphate. The chain is Carbamoyl phosphate synthase large chain from Streptococcus pneumoniae serotype 2 (strain D39 / NCTC 7466).